A 226-amino-acid chain; its full sequence is Fibronectin type III domain-containing protein 10 (226 aa).

The signal sequence occupies residues 1–20; the sequence is MRAPPLLLLLAACAPPPCAA. Topologically, residues 21–182 are extracellular; it reads AAPTPPGWEP…FTAEPAGMQD (162 aa). The region spanning 74–166 is the Fibronectin type-III domain; sequence PAGRSLRASV…PAAAAPETPE (93 aa). Asn-86 and Asn-109 each carry an N-linked (GlcNAc...) asparagine glycan. Residues 183-203 traverse the membrane as a helical segment; it reads IVVAMTAVGGSICVMLVVICL. The Cytoplasmic segment spans residues 204–226; that stretch reads LVAYITENLMRPALARPGLRRHP.

The protein resides in the membrane. The sequence is that of Fibronectin type III domain-containing protein 10 (FNDC10) from Homo sapiens (Human).